The sequence spans 348 residues: NADH-quinone oxidoreductase subunit H (348 aa).

The next 8 membrane-spanning stretches (helical) occupy residues 21–41 (IIGILVIALPLMLAVAMIIYA), 87–107 (GLFLLAPIITFTVALIVWAVI), 120–140 (IGLLYVLAASSIGVYGVIIAG), 166–186 (IGFVLISVVLWTGSFNMSAIV), 193–213 (IFGFINGYGFNPLLFPMAVVF), 258–278 (NVILMCGLNAILFWGGWLPPV), 283–303 (LYMVPGIIWFFAKLLFFFFVF), and 323–343 (WKVFLPLSLFWVFLVSGWLML).

Belongs to the complex I subunit 1 family. As to quaternary structure, NDH-1 is composed of 14 different subunits. Subunits NuoA, H, J, K, L, M, N constitute the membrane sector of the complex.

It localises to the cell inner membrane. The catalysed reaction is a quinone + NADH + 5 H(+)(in) = a quinol + NAD(+) + 4 H(+)(out). Its function is as follows. NDH-1 shuttles electrons from NADH, via FMN and iron-sulfur (Fe-S) centers, to quinones in the respiratory chain. The immediate electron acceptor for the enzyme in this species is believed to be ubiquinone. Couples the redox reaction to proton translocation (for every two electrons transferred, four hydrogen ions are translocated across the cytoplasmic membrane), and thus conserves the redox energy in a proton gradient. This subunit may bind ubiquinone. The sequence is that of NADH-quinone oxidoreductase subunit H from Rhizorhabdus wittichii (strain DSM 6014 / CCUG 31198 / JCM 15750 / NBRC 105917 / EY 4224 / RW1) (Sphingomonas wittichii).